The primary structure comprises 299 residues: tRNA dimethylallyltransferase (299 aa).

13–20 serves as a coordination point for ATP; that stretch reads GPTASGKT. 15-20 contacts substrate; it reads TASGKT. An interaction with substrate tRNA region spans residues 38–41; that stretch reads DSRQ.

This sequence belongs to the IPP transferase family. As to quaternary structure, monomer. It depends on Mg(2+) as a cofactor.

It catalyses the reaction adenosine(37) in tRNA + dimethylallyl diphosphate = N(6)-dimethylallyladenosine(37) in tRNA + diphosphate. Catalyzes the transfer of a dimethylallyl group onto the adenine at position 37 in tRNAs that read codons beginning with uridine, leading to the formation of N6-(dimethylallyl)adenosine (i(6)A). This is tRNA dimethylallyltransferase from Prochlorococcus marinus (strain MIT 9515).